The sequence spans 257 residues: Galactitol 2-dehydrogenase (257 aa).

NAD(+) contacts are provided by residues 21 to 23, 67 to 68, N94, Y162, and K166; these read RAI and DV. Y162 acts as the Proton acceptor in catalysis.

The protein belongs to the short-chain dehydrogenases/reductases (SDR) family. Homotetramer. Requires Mg(2+) as cofactor.

It carries out the reaction galactitol + NAD(+) = keto-D-tagatose + NADH + H(+). Functionally, catalyzes the oxidation of galactitol to D-tagatose. Also catalyzes the oxidation of a wide range of substrates, including polyvalent aliphatic alcohols and polyols, to the corresponding ketones and ketoses. Galactitol is the preferred substrate. This chain is Galactitol 2-dehydrogenase, found in Rhizobium johnstonii (strain DSM 114642 / LMG 32736 / 3841) (Rhizobium leguminosarum bv. viciae).